The sequence spans 244 residues: Triosephosphate isomerase (244 aa).

9–11 (NWK) is a substrate binding site. Histidine 93 (electrophile) is an active-site residue. The active-site Proton acceptor is the glutamate 160. The substrate site is built by glycine 166 and serine 206.

It belongs to the triosephosphate isomerase family. Homodimer.

The protein localises to the cytoplasm. The enzyme catalyses D-glyceraldehyde 3-phosphate = dihydroxyacetone phosphate. The protein operates within carbohydrate biosynthesis; gluconeogenesis. It participates in carbohydrate degradation; glycolysis; D-glyceraldehyde 3-phosphate from glycerone phosphate: step 1/1. Functionally, involved in the gluconeogenesis. Catalyzes stereospecifically the conversion of dihydroxyacetone phosphate (DHAP) to D-glyceraldehyde-3-phosphate (G3P). The protein is Triosephosphate isomerase of Mycoplasma genitalium (strain ATCC 33530 / DSM 19775 / NCTC 10195 / G37) (Mycoplasmoides genitalium).